The sequence spans 326 residues: Intracellular serine protease (326 aa).

One can recognise a Peptidase S8 domain in the interval 23-303 (PRGVEMIQAP…NGLLYLTAVE (281 aa)). Active-site charge relay system residues include Asp-49, His-86, and Ser-244.

This sequence belongs to the peptidase S8 family.

Involved in the generation of beta- and alpha-amylases from the large amylase precursor. The sequence is that of Intracellular serine protease (isp) from Paenibacillus polymyxa (Bacillus polymyxa).